The chain runs to 152 residues: Small ribosomal subunit protein uS11A (152 aa).

Residues 131-152 form a disordered region; the sequence is EDVTPIPSDSTRRKGGRRGRRL. Over residues 143 to 152 the composition is skewed to basic residues; the sequence is RKGGRRGRRL.

This sequence belongs to the universal ribosomal protein uS11 family.

The chain is Small ribosomal subunit protein uS11A from Anopheles gambiae (African malaria mosquito).